A 430-amino-acid chain; its full sequence is Glucose-6-phosphate isomerase (430 aa).

Glu284 acts as the Proton donor in catalysis. Residues His305 and Lys420 contribute to the active site.

This sequence belongs to the GPI family.

It localises to the cytoplasm. The catalysed reaction is alpha-D-glucose 6-phosphate = beta-D-fructose 6-phosphate. The protein operates within carbohydrate biosynthesis; gluconeogenesis. It functions in the pathway carbohydrate degradation; glycolysis; D-glyceraldehyde 3-phosphate and glycerone phosphate from D-glucose: step 2/4. Functionally, catalyzes the reversible isomerization of glucose-6-phosphate to fructose-6-phosphate. The polypeptide is Glucose-6-phosphate isomerase (Mycoplasmopsis synoviae (strain 53) (Mycoplasma synoviae)).